The chain runs to 558 residues: D-xylose-proton symporter-like 3, chloroplastic (558 aa).

Residues 1 to 31 (MAFAVSVQSHFAIRALKRDHFKNPSPRTFCS) constitute a chloroplast transit peptide. A run of 12 helical transmembrane segments spans residues 98–118 (VILP…DIGA), 146–166 (LVVS…YGVA), 175–195 (LIIA…APDL), 197–217 (ILLV…HGAP), 238–258 (LFIV…IDVV), 264–284 (MYGF…SLPA), 359–379 (ALTI…PSVL), 400–420 (VSVI…AKVD), 426–446 (PLLI…SAYY), 449–469 (LGGF…CYQI), 491–511 (GISL…FAFS), and 522–542 (LFLL…LVVP).

It belongs to the major facilitator superfamily. Sugar transporter (TC 2.A.1.1) family.

It is found in the plastid. The protein localises to the chloroplast membrane. The sequence is that of D-xylose-proton symporter-like 3, chloroplastic from Arabidopsis thaliana (Mouse-ear cress).